The primary structure comprises 24 residues: Pseudin-2 (24 aa).

Expressed by the skin glands.

The protein localises to the secreted. In terms of biological role, antimicrobial peptide with activity against fungus (C.albicans) and Gram-positive and Gram-negative bacteria (S.aureus and E.coli). Also has low hemolytic activity against human erythrocytes. The sequence is that of Pseudin-2 from Pseudis paradoxa (Paradoxical frog).